A 240-amino-acid polypeptide reads, in one-letter code: Large ribosomal subunit protein bL25 (240 aa).

Disordered regions lie at residues 1–20 (MAEN…GPAR) and 204–240 (GAAP…KAKK). Over residues 204-229 (GAAPAAGAAAPAGGAAPAAGAAPAKG) the composition is skewed to low complexity. Residues 230 to 240 (GEAKGGDKAKK) are compositionally biased toward basic and acidic residues.

It belongs to the bacterial ribosomal protein bL25 family. CTC subfamily. In terms of assembly, part of the 50S ribosomal subunit; part of the 5S rRNA/L5/L18/L25 subcomplex. Contacts the 5S rRNA. Binds to the 5S rRNA independently of L5 and L18.

Functionally, this is one of the proteins that binds to the 5S RNA in the ribosome where it forms part of the central protuberance. This is Large ribosomal subunit protein bL25 from Anaeromyxobacter sp. (strain K).